Consider the following 862-residue polypeptide: Probable inorganic carbon transporter subunit DabA (862 aa).

4 residues coordinate Zn(2+): C365, D367, H540, and C555.

This sequence belongs to the inorganic carbon transporter (TC 9.A.2) DabA family. As to quaternary structure, forms a complex with DabB. Zn(2+) is required as a cofactor.

It localises to the cell inner membrane. Functionally, part of an energy-coupled inorganic carbon pump. This chain is Probable inorganic carbon transporter subunit DabA, found in Vibrio cholerae serotype O1 (strain ATCC 39315 / El Tor Inaba N16961).